The chain runs to 105 residues: Small ribosomal subunit protein uS10 (105 aa).

Belongs to the universal ribosomal protein uS10 family. As to quaternary structure, part of the 30S ribosomal subunit.

In terms of biological role, involved in the binding of tRNA to the ribosomes. The polypeptide is Small ribosomal subunit protein uS10 (Francisella tularensis subsp. mediasiatica (strain FSC147)).